An 869-amino-acid polypeptide reads, in one-letter code: Translation initiation factor IF-2 (869 aa).

Disordered stretches follow at residues 51–78 (KQHG…NMGK) and 105–277 (EEET…SDLK). A compositionally biased stretch (polar residues) spans 67 to 76 (QRKTTSTLNM). Positions 110–119 (RALAEQQAQL) are enriched in low complexity. Basic and acidic residues predominate over residues 120-241 (EAEKAAAEEA…KKQEAEEVHV (122 aa)). The tr-type G domain occupies 369–542 (SRAPVVTIMG…ELLDLKAPPT (174 aa)). The interval 378 to 385 (GHVDHGKT) is G1. 378-385 (GHVDHGKT) serves as a coordination point for GTP. The G2 stretch occupies residues 403-407 (GITQH). Positions 424-427 (DTPG) are G3. GTP-binding positions include 424 to 428 (DTPGH) and 478 to 481 (NKMD). The G4 stretch occupies residues 478-481 (NKMD). Positions 514-516 (SAK) are G5.

The protein belongs to the TRAFAC class translation factor GTPase superfamily. Classic translation factor GTPase family. IF-2 subfamily.

It localises to the cytoplasm. In terms of biological role, one of the essential components for the initiation of protein synthesis. Protects formylmethionyl-tRNA from spontaneous hydrolysis and promotes its binding to the 30S ribosomal subunits. Also involved in the hydrolysis of GTP during the formation of the 70S ribosomal complex. This is Translation initiation factor IF-2 from Pseudoalteromonas atlantica (strain T6c / ATCC BAA-1087).